Consider the following 443-residue polypeptide: Trigger factor (443 aa).

One can recognise a PPIase FKBP-type domain in the interval 161–246 (GDKVVIDFQG…IKKIMEGKLP (86 aa)).

It belongs to the FKBP-type PPIase family. Tig subfamily.

It localises to the cytoplasm. It carries out the reaction [protein]-peptidylproline (omega=180) = [protein]-peptidylproline (omega=0). Its function is as follows. Involved in protein export. Acts as a chaperone by maintaining the newly synthesized protein in an open conformation. Functions as a peptidyl-prolyl cis-trans isomerase. The protein is Trigger factor of Legionella pneumophila subsp. pneumophila (strain Philadelphia 1 / ATCC 33152 / DSM 7513).